The sequence spans 477 residues: Pentatricopeptide repeat-containing protein At1g55630 (477 aa).

9 PPR repeats span residues threonine 151 to threonine 185, threonine 186 to proline 220, tyrosine 221 to proline 255, aspartate 256 to proline 290, aspartate 291 to proline 325, glycine 326 to proline 360, aspartate 361 to proline 395, asparagine 396 to proline 430, and asparagine 431 to valine 465.

The protein belongs to the PPR family. P subfamily.

This chain is Pentatricopeptide repeat-containing protein At1g55630, found in Arabidopsis thaliana (Mouse-ear cress).